A 312-amino-acid polypeptide reads, in one-letter code: Gamma-soluble NSF attachment protein (312 aa).

Residues 281–312 form a disordered region; the sequence is KKKSPATPQAKPDGAAGMAAEEEEDEYSGGLC. At Ser284 the chain carries Phosphoserine. Thr287 bears the Phosphothreonine mark. Positions 300 to 312 are enriched in acidic residues; sequence AEEEEDEYSGGLC. At Ser308 the chain carries Phosphoserine.

The protein belongs to the SNAP family. In terms of assembly, interacts with RAB11FIP5. Interacts with VTI1A. As to expression, abundantly expressed in the heart, liver and kidneys with lower expression in the brain, spleen, lung, muscle and testes.

The protein resides in the membrane. It is found in the golgi apparatus. In terms of biological role, required for vesicular transport between the endoplasmic reticulum and the Golgi apparatus. This is Gamma-soluble NSF attachment protein from Mus musculus (Mouse).